Reading from the N-terminus, the 505-residue chain is Calcium/calmodulin-dependent protein kinase kinase 1 (505 aa).

Residues 27–66 (HLEEAEEGPEPASNGVDPPPRARAASVIPGSASRPTPVRP) form a disordered region. Ser-67 and Ser-74 each carry phosphoserine. Arg-78 bears the Asymmetric dimethylarginine mark. Ser-100 carries the post-translational modification Phosphoserine. At Thr-108 the chain carries Phosphothreonine. The region spanning 128-409 (YKLQSEIGKG…VSDIKLHPWV (282 aa)) is the Protein kinase domain. ATP contacts are provided by residues 134 to 142 (IGKGAYGVV) and Lys-157. The tract at residues 167 to 189 (QYGFPRRPPPRGSQAPQGGPAKQ) is RP domain. Asp-275 acts as the Proton acceptor in catalysis. An autoinhibitory domain region spans residues 435-440 (KNSVKL). A calmodulin-binding region spans residues 438-463 (VKLIPSWTTVILVKSMLRKRSFGNPF). Residues Ser-458, Ser-475, and Ser-492 each carry the phosphoserine modification. The segment at 460–505 (GNPFEPQARREERSMSAPGNLLLKEGCGEGGKSPELPGVQEDEAAS) is disordered.

This sequence belongs to the protein kinase superfamily. Ser/Thr protein kinase family. In terms of assembly, interacts with CAMK4 and calmodulin. In terms of processing, appears to be autophosphorylated. Phosphorylated at multiple sites by PRCAKA/PKA. Phosphorylation of Ser-458 is blocked upon binding to Ca(2+)/calmodulin. May be phosphorylated by CAMK1 and CAMK4. Mostly expressed in the brain with higher levels in cortex and hippocampus. Lower expression levels were detected in striatum, nucleus accumbens and cerebellum (at protein level). Abundant in forebrain, weaker in cerebellum and also detected in thymus and spleen.

Its subcellular location is the cytoplasm. It localises to the nucleus. It carries out the reaction L-seryl-[protein] + ATP = O-phospho-L-seryl-[protein] + ADP + H(+). The enzyme catalyses L-threonyl-[protein] + ATP = O-phospho-L-threonyl-[protein] + ADP + H(+). With respect to regulation, activated by Ca(2+)/calmodulin. Binding of calmodulin may relieve intrasteric autoinhibition. Partially inhibited upon phosphorylation by PRCAKA/PKA. May be regulated through phosphorylation by CAMK1 and CAMK4. Its function is as follows. Calcium/calmodulin-dependent protein kinase that belongs to a proposed calcium-triggered signaling cascade involved in a number of cellular processes. Phosphorylates CAMK1, CAMK1D, CAMK1G and CAMK4. Involved in regulating cell apoptosis. Promotes cell survival by phosphorylating AKT1/PKB that inhibits pro-apoptotic BAD/Bcl2-antagonist of cell death. This is Calcium/calmodulin-dependent protein kinase kinase 1 (Camkk1) from Rattus norvegicus (Rat).